The chain runs to 1028 residues: MGRVPVPRSDSVRVAVRVRPFSQREKNSGSQCVISMHSGNISIRDPKNEERVKTFTFDLTYWSHDGFQKDEDGVLIPSDPASKFAGQSDVFHDIGRGILDSAWRGYNATLLAYGQTGSGKSYSMIGFGTNKGLIPRVCEELFQAIEKQKENLEPQVMFSMLEIYNEQIRDLLSRTKAPGGLRVREDQQLGFFVEGLKWVPCENYAQIEKLVEQGSKIRMTASTNMNASSSRSHMLIAIQFKQVFLDTALTKRSSINMVDLAGSERQRSSGSEGDRLREGSRVNLSLTSLGNVISALADLAMGKKVLHIPYRDSVLTKLLQSALGGNSRTTLIAALSPADICYEETLSTLRYAERAKKVRNRAVINTCPLARASRAENALLLGFRGAGAAEHPACFWAEQQLGNQGTWAQLLEQARREWEEQYEALTQEQKMVRILPHLLNVNEDPQLTGVLKFFIHNGSCDVGRAASNAICLQGLGISDKHASFVNLDGKVTVAPHSKCKVIVNGVPVTGRTKLQHLDRIILGSNSAFLYVGFPSERGAEDLSRFDYDFFQLERAAAEGVSVATLGCVSPGDDQADPSILAVFQDYVKLMPLVVEANQMSEELKKGLTMELKVKNLASSDSRGYDLQKEVMVKVTKQGTHEVWIWSKAKFINRKFLMEELYQRFLESRDSHVAQEDDPFWDPLEVVHLGSAHVWLQPLAHCMMLEEQVEFLNCDGLEEAVLHIRITPCSPEGWAHGEEDMVIDPLELLGKRIDFQTHIVRCLGVKWLKEDGSRGIQMGYGIYDLPNTLYTKPVWKSVNPRIEETVHFAALGASREFLDYLLTNALIVDLWGLQEGCAPLGVSQLDVLLTGEGHIMVDTKTFSSVKDVSQITSNQVPELYQKLLKLEQETELLRDVNRALRGENVFLKASLENAGSAPQAQKLDNPEGATRTAAREAKQVCAQQASSDAQLARALKVFYQGMGVARGQLLRLRRCRPPEDDQMLRPFVHQQSQMLKDLEDLLESSLHKLKADVAFIVKKRKEYLLPSQQ.

In terms of domain architecture, Kinesin motor spans 11-358 (SVRVAVRVRP…LRYAERAKKV (348 aa)). Position 114–121 (114–121 (GQTGSGKS)) interacts with ATP. An FHA domain is found at 460–523 (CDVGRAASNA…LQHLDRIILG (64 aa)). Positions 873-902 (NQVPELYQKLLKLEQETELLRDVNRALRGE) form a coiled coil.

Belongs to the TRAFAC class myosin-kinesin ATPase superfamily. Kinesin family.

The protein localises to the mitochondrion membrane. In terms of biological role, microtubule-dependent motor protein required for mitochondrion morphology and transport of mitochondria in neuronal cells. This is Kinesin-like protein KIF28 from Mus musculus (Mouse).